The sequence spans 152 residues: Transcription elongation factor Spt5 (152 aa).

Residues 98 to 127 enclose the KOW domain; the sequence is EGDLVEVVSGPFRGMQAQVVKVTEGKGEVV.

This sequence belongs to the archaeal Spt5 family. In terms of assembly, heterodimer composed of Spt4 and Spt5. Interacts with RNA polymerase (RNAP).

Stimulates transcription elongation. This chain is Transcription elongation factor Spt5, found in Acidianus ambivalens (Desulfurolobus ambivalens).